We begin with the raw amino-acid sequence, 154 residues long: Proteasome subunit beta type-4 (154 aa).

An N-acetylmethionine modification is found at Met-1. A propeptide spanning residues 1–45 is cleaved from the precursor; the sequence is MESILESRSGHWAGGPAPGQFYRIPPTPGSIVDPXSVLYGSPITR. Residue Tyr-102 is modified to Phosphotyrosine.

It belongs to the peptidase T1B family. The 26S proteasome consists of a 20S proteasome core and two 19S regulatory subunits. The 20S proteasome core is a barrel-shaped complex made of 28 subunits that are arranged in four stacked rings. The two outer rings are each formed by seven alpha subunits, and the two inner rings are formed by seven beta subunits. The proteolytic activity is exerted by three beta-subunits PSMB5, PSMB6 and PSMB7. Forms a ternary complex with SMAD1 and OAZ1 before PSMB4 is incorporated into the 20S proteasome. Interacts with PRPF19.

The protein localises to the cytoplasm. It is found in the nucleus. Non-catalytic component of the 20S core proteasome complex involved in the proteolytic degradation of most intracellular proteins. This complex plays numerous essential roles within the cell by associating with different regulatory particles. Associated with two 19S regulatory particles, forms the 26S proteasome and thus participates in the ATP-dependent degradation of ubiquitinated proteins. The 26S proteasome plays a key role in the maintenance of protein homeostasis by removing misfolded or damaged proteins that could impair cellular functions, and by removing proteins whose functions are no longer required. Associated with the PA200 or PA28, the 20S proteasome mediates ubiquitin-independent protein degradation. This type of proteolysis is required in several pathways including spermatogenesis (20S-PA200 complex) or generation of a subset of MHC class I-presented antigenic peptides (20S-PA28 complex). SMAD1/OAZ1/PSMB4 complex mediates the degradation of the CREBBP/EP300 repressor SNIP1. In Sus scrofa (Pig), this protein is Proteasome subunit beta type-4 (PSMB4).